Consider the following 506-residue polypeptide: Maturase K (506 aa).

The protein belongs to the intron maturase 2 family. MatK subfamily.

Its subcellular location is the plastid. The protein localises to the chloroplast. Its function is as follows. Usually encoded in the trnK tRNA gene intron. Probably assists in splicing its own and other chloroplast group II introns. This chain is Maturase K, found in Trifolium repens (Creeping white clover).